A 133-amino-acid chain; its full sequence is ATP synthase epsilon chain, chloroplastic (133 aa).

It belongs to the ATPase epsilon chain family. In terms of assembly, F-type ATPases have 2 components, CF(1) - the catalytic core - and CF(0) - the membrane proton channel. CF(1) has five subunits: alpha(3), beta(3), gamma(1), delta(1), epsilon(1). CF(0) has three main subunits: a, b and c.

It is found in the plastid. It localises to the chloroplast thylakoid membrane. Its function is as follows. Produces ATP from ADP in the presence of a proton gradient across the membrane. In Cyanidium caldarium (Red alga), this protein is ATP synthase epsilon chain, chloroplastic.